Consider the following 257-residue polypeptide: MEFPDLGAHCSEPSCQRLDFLPLKCDACSGIFCADHVAYAQHHCGSAYQKDIQVPVCPLCNVPVPVARGEPPDRAVGEHIDRDCRSDPAQQKRKIFTNKCERAGCRQREMMKLTCERCSRNFCIKHRHPLDHDCSGEGHPTSRAGLAAISRAQAVASTSTVPSPSQTMPSCTSPSRATTRSPSWTAPPVIALQNGLSEDEALQRALEMSLAETKPQVPSCQEEEDLALAQALSASEAEYQRQQAQSRSSKPSNCSLC.

2 consecutive AN1-type zinc fingers follow at residues 4 to 52 and 94 to 142; these read PDLG…QKDI and KIFT…HPTS. Residues Cys-10, Cys-15, Cys-25, Cys-28, Cys-33, His-36, His-42, Cys-44, Cys-100, Cys-105, Cys-115, Cys-118, Cys-123, His-126, His-132, and Cys-134 each coordinate Zn(2+). The segment at 141 to 151 is VCP/p97-interacting motif (VIM); sequence TSRAGLAAISR. The tract at residues 153 to 187 is disordered; sequence QAVASTSTVPSPSQTMPSCTSPSRATTRSPSWTAP. Polar residues predominate over residues 155 to 171; the sequence is VASTSTVPSPSQTMPSC. Ser-163 and Ser-173 each carry phosphoserine. Positions 172–186 are enriched in low complexity; it reads TSPSRATTRSPSWTA. UIM domains follow at residues 197-216 and 221-240; these read SEDEALQRALEMSLAETKPQ and QEEEDLALAQALSASEAEYQ. Cysteine methyl ester is present on Cys-254. Cys-254 is lipidated: S-geranylgeranyl cysteine. A CAAX motif motif is present at residues 254–257; sequence CSLC. Positions 255–257 are cleaved as a propeptide — removed in mature form; sequence SLC.

As to quaternary structure, binds 'Lys-48'-linked polyubiquitin chains of ubiquitinated proteins. Associates with the proteasome complex; upon exposure to arsenite. Interacts (via VIM motif) with VCP; the interaction is direct. Interacts with BAG6. Interacts with IGF1R (nascent precursor form). Interacts with DERL1, FAF2, NPLOC4 and UFD1; probably through VCP. Phosphorylated by MAPK14. Phosphorylation has no effect on association with the proteasome complex.

The protein resides in the endoplasmic reticulum membrane. Functionally, plays a role in protein homeostasis by regulating both the translocation and the ubiquitin-mediated proteasomal degradation of nascent proteins at the endoplasmic reticulum. It is involved in the regulation of signal-mediated translocation of proteins into the endoplasmic reticulum. It also plays a role in the ubiquitin-mediated proteasomal degradation of proteins for which signal-mediated translocation to the endoplasmic reticulum has failed. May therefore function in the endoplasmic reticulum stress-induced pre-emptive quality control, a mechanism that selectively attenuates the translocation of newly synthesized proteins into the endoplasmic reticulum and reroutes them to the cytosol for proteasomal degradation. By controlling the steady-state expression of the IGF1R receptor, indirectly regulates the insulin-like growth factor receptor signaling pathway. The protein is AN1-type zinc finger protein 2B of Homo sapiens (Human).